Here is a 168-residue protein sequence, read N- to C-terminus: uncharacterized protein (168 aa).

The segment covering Met-1 to Ser-15 has biased composition (low complexity). Residues Met-1–Asn-107 are disordered. Residues Ser-33 to Ser-47 are compositionally biased toward acidic residues. Low complexity predominate over residues Asp-48 to Asn-107.

This is an uncharacterized protein from Dictyostelium discoideum (Social amoeba).